Consider the following 666-residue polypeptide: tRNA 5-methylaminomethyl-2-thiouridine biosynthesis bifunctional protein MnmC (666 aa).

The segment at 1–245 is tRNA (mnm(5)s(2)U34)-methyltransferase; it reads MKQYAIQPAT…KREMLCGVME (245 aa). The segment at 270–666 is FAD-dependent cmnm(5)s(2)U34 oxidoreductase; the sequence is IGGGIASALL…RKLLKGKAVK (397 aa).

In the N-terminal section; belongs to the methyltransferase superfamily. tRNA (mnm(5)s(2)U34)-methyltransferase family. This sequence in the C-terminal section; belongs to the DAO family. The cofactor is FAD.

The protein localises to the cytoplasm. The catalysed reaction is 5-aminomethyl-2-thiouridine(34) in tRNA + S-adenosyl-L-methionine = 5-methylaminomethyl-2-thiouridine(34) in tRNA + S-adenosyl-L-homocysteine + H(+). Its function is as follows. Catalyzes the last two steps in the biosynthesis of 5-methylaminomethyl-2-thiouridine (mnm(5)s(2)U) at the wobble position (U34) in tRNA. Catalyzes the FAD-dependent demodification of cmnm(5)s(2)U34 to nm(5)s(2)U34, followed by the transfer of a methyl group from S-adenosyl-L-methionine to nm(5)s(2)U34, to form mnm(5)s(2)U34. In Salmonella arizonae (strain ATCC BAA-731 / CDC346-86 / RSK2980), this protein is tRNA 5-methylaminomethyl-2-thiouridine biosynthesis bifunctional protein MnmC.